The primary structure comprises 324 residues: Lipoyl synthase, chloroplastic (324 aa).

Low complexity-rich tracts occupy residues 1–12 and 20–29; these read MCGPTATTVANA and KGLPPGLKKP. Residues 1–30 form a disordered region; that stretch reads MCGPTATTVANAGTGGETIKGLPPGLKKPP. Positions 58, 63, 69, 86, 90, 93, and 302 each coordinate [4Fe-4S] cluster. The region spanning 72–291 is the Radical SAM core domain; it reads GDTGTATVML…AYGEEVIGFR (220 aa).

This sequence belongs to the radical SAM superfamily. Lipoyl synthase family. Requires [4Fe-4S] cluster as cofactor.

It localises to the plastid. It is found in the chloroplast. It carries out the reaction [[Fe-S] cluster scaffold protein carrying a second [4Fe-4S](2+) cluster] + N(6)-octanoyl-L-lysyl-[protein] + 2 oxidized [2Fe-2S]-[ferredoxin] + 2 S-adenosyl-L-methionine + 4 H(+) = [[Fe-S] cluster scaffold protein] + N(6)-[(R)-dihydrolipoyl]-L-lysyl-[protein] + 4 Fe(3+) + 2 hydrogen sulfide + 2 5'-deoxyadenosine + 2 L-methionine + 2 reduced [2Fe-2S]-[ferredoxin]. It functions in the pathway protein modification; protein lipoylation via endogenous pathway; protein N(6)-(lipoyl)lysine from octanoyl-[acyl-carrier-protein]: step 2/2. Catalyzes the radical-mediated insertion of two sulfur atoms into the C-6 and C-8 positions of the octanoyl moiety bound to the lipoyl domains of lipoate-dependent enzymes, thereby converting the octanoylated domains into lipoylated derivatives. The polypeptide is Lipoyl synthase, chloroplastic (Ostreococcus lucimarinus (strain CCE9901)).